Reading from the N-terminus, the 680-residue chain is MNFETSRCATLQYCPDPYIQRFIETPSHFSWKESYYRSAMSQSTQTSEFLSPEVFQHIWDFLEQPICSVQPIDLNFVDEPSENGATNKIEISMDCIRMQDSDLSDPMWPQYTNLGLLNGMDQQIQNGSSSTSPYNTDHAQNSVTAPSPYAQPSSTFDALSPSPAIPSNTDYPGPHSFDVSFQQSSTAKSATWTYSTELKKLYCQIAKTCPIQIKVMTPPPQGAVIRAMPVYKKAEHVTEVVKRCPNHELSREFNEGQIAPPSHLIRVEGNSHAQYVEDPITGRQSVLVPYEPPQVGTEFTTVLYNFMCNSSCVGGMNRRPILIIVTLETRDGQVLGRRCFEARICACPGRDRKADEDSIRKQQVSDSAKNGDGTKRPFRQNTHGIQMTSIKKRRSPDDELLYLPVRGRETYEMLLKIKESLELMQYLPQHTIETYRQQQQQQHQHLLQKQTSMQSQSSYGNSSPPLNKMNSMNKLPSVSQLINPQQRNALTPTTMPEGMGANIPMMGTHMPMAGDMNGLSPTQALPPPLSMPSTSHCTPPPPYPTDCSIVSFLARLGCSSCLDYFTTQGLTTIYQIEHYSMDDLASLKIPEQFRHAIWKGILDHRQLHDFSSPPHLLRTPSGASTVSVGSSETRGERVIDAVRFTLRQTISFPPRDEWNDFNFDMDSRRNKQQRIKEEGE.

The tract at residues 1 to 107 (MNFETSRCAT…MQDSDLSDPM (107 aa)) is transcription activation. Residues 122 to 157 (QQIQNGSSSTSPYNTDHAQNSVTAPSPYAQPSSTFD) show a composition bias toward polar residues. Residues 122–171 (QQIQNGSSSTSPYNTDHAQNSVTAPSPYAQPSSTFDALSPSPAIPSNTDY) are disordered. Residues 170 to 362 (DYPGPHSFDV…KADEDSIRKQ (193 aa)) mediate DNA binding. Zn(2+)-binding residues include C244, H247, C308, and C312. Residues 351 to 360 (DRKADEDSIR) are compositionally biased toward basic and acidic residues. 2 disordered regions span residues 351–393 (DRKA…IKKR) and 436–472 (RQQQ…MNSM). Residues 352 to 388 (RKADEDSIRKQQVSDSAKNGDGTKRPFRQNTHGIQMT) form an interaction with HIPK2 region. A compositionally biased stretch (polar residues) spans 379–389 (RQNTHGIQMTS). The tract at residues 394–443 (RSPDDELLYLPVRGRETYEMLLKIKESLELMQYLPQHTIETYRQQQQQQH) is oligomerization. A compositionally biased stretch (low complexity) spans 437–463 (QQQQQQHQHLLQKQTSMQSQSSYGNSS). The SAM domain maps to 541–607 (PPYPTDCSIV…WKGILDHRQL (67 aa)). The tract at residues 610-680 (FSSPPHLLRT…KQQRIKEEGE (71 aa)) is transactivation inhibition. K676 is covalently cross-linked (Glycyl lysine isopeptide (Lys-Gly) (interchain with G-Cter in SUMO)).

This sequence belongs to the p53 family. Binds DNA as a homotetramer. Isoform composition of the tetramer may determine transactivation activity. Interacts with HIPK2. Interacts with SSRP1, leading to stimulate coactivator activity. Interacts with WWP1. Interacts with PDS5A. Interacts (via activation domain) with NOC2L. Zn(2+) serves as cofactor. May be sumoylated. In terms of processing, ubiquitinated. Polyubiquitination involves WWP1 and leads to proteasomal degradation of this protein. As to expression, widely expressed, notably in thymus, prostate, placenta, and skeletal muscle, although the precise isoform varies according to tissue type. Progenitor cell layers of skin, breast and prostate express high levels of DeltaN-type isoforms.

The protein localises to the nucleus. In terms of biological role, acts as a sequence specific DNA binding transcriptional activator or repressor. The isoforms contain a varying set of transactivation and auto-regulating transactivation inhibiting domains thus showing an isoform specific activity. May be required in conjunction with TP73/p73 for initiation of p53/TP53 dependent apoptosis in response to genotoxic insults and the presence of activated oncogenes. Involved in Notch signaling by probably inducing JAG1 and JAG2. Activates RIPK4 transcription. Plays a role in the regulation of epithelial morphogenesis. The ratio of DeltaN-type and TA*-type isoforms may govern the maintenance of epithelial stem cell compartments and regulate the initiation of epithelial stratification from the undifferentiated embryonal ectoderm. Required for limb formation from the apical ectodermal ridge. Activates transcription of the p21 promoter. In Rattus norvegicus (Rat), this protein is Tumor protein 63 (Tp63).